The primary structure comprises 268 residues: MNGTANPLLDREEHCLRLGESFEKRPRASFHTIRYDFKPASIDTSCEGELQVGKGDEVTITLPHIPGSTPPMTVFKGNKRPYQKDCVLIINHDTGEYVLEKLSSSIQVKKTRAEGSSKIQARMEQQPTRPPQTSQPPPPPPPMPFRAPTKPPVGPKTSPLKDNPSPEPQLDDIKRELRAEVDIIEQMSSSSGSSSSDSESSSGSDDDSSSSGGEDNGPASPPQPSHQQPYNSRPAVANGTSRPQGSNQLMNTLRNDLQLSESGSDSDD.

Residues 106-268 (IQVKKTRAEG…LSESGSDSDD (163 aa)) form a disordered region. Pro residues predominate over residues 128-154 (TRPPQTSQPPPPPPPMPFRAPTKPPVG). A Phosphoserine modification is found at serine 165. Residues 171 to 181 (DDIKRELRAEV) show a composition bias toward basic and acidic residues. Positions 182–262 (DIIEQMSSSS…LRNDLQLSES (81 aa)) are necessary for transactivation activity. The segment covering 188–213 (SSSSGSSSSDSESSSGSDDDSSSSGG) has biased composition (low complexity). Residues 238-268 (NGTSRPQGSNQLMNTLRNDLQLSESGSDSDD) are compositionally biased toward polar residues.

The protein belongs to the EAF family. In terms of assembly, component of the super elongation complex (SEC), at least composed of EAF1, EAF2, CDK9, MLLT3/AF9, AFF (AFF1 or AFF4), the P-TEFb complex and ELL (ELL, ELL2 or ELL3). Interacts with ELL and ELL2. As to expression, strongly expressed in heart, brain, placenta, lung, liver, skeletal muscle, kidney, pancreas, spleen, prostate, testis, small intestine and colon. Poorly expressed in thymus.

Its subcellular location is the nucleus speckle. The protein localises to the nucleus. It localises to the cajal body. Functionally, acts as a transcriptional transactivator of ELL and ELL2 elongation activities. This Homo sapiens (Human) protein is ELL-associated factor 1 (EAF1).